We begin with the raw amino-acid sequence, 219 residues long: Vacuolar protein sorting-associated protein 32 homolog 2 (219 aa).

Coiled-coil stretches lie at residues 10–41 and 117–176; these read KQEANALQTLDKLNETLEMLEKKEKVLLKKAG and TNID…QLLQ. The disordered stretch occupies residues 168-219; the sequence is EELESQLLQPATTAPPLPSVPVPAGRQPARPVPQKRTAEEEELAALQAEMAL.

This sequence belongs to the SNF7 family. Component of the endosomal sorting required for transport complex III (ESCRT-III), composed at least of VPS2, VPS20, VPS24 and VPS32. Interacts with SKD1. Interacts with BRO1/ALIX.

Its subcellular location is the endosome. Its function is as follows. Component of the ESCRT-III complex, which is required for multivesicular bodies (MVBs) formation and sorting of endosomal cargo proteins into MVBs. The ESCRT-III complex is probably involved in the concentration of MVB cargo. The protein is Vacuolar protein sorting-associated protein 32 homolog 2 (VPS32.2) of Arabidopsis thaliana (Mouse-ear cress).